The chain runs to 413 residues: Protein MANNAN SYNTHESIS-RELATED (413 aa).

Residues 1 to 5 are Cytoplasmic-facing; that stretch reads MNSME. The helical; Signal-anchor for type II membrane protein transmembrane segment at 6-26 threads the bilayer; sequence IRQAFAGLLTLSMFIMLGNMI. Residues 27–413 lie on the Lumenal side of the membrane; it reads KKDHFDYPAE…KNHLAYKCFC (387 aa). An N-linked (GlcNAc...) asparagine glycan is attached at asparagine 207. 255–257 provides a ligand contact to substrate; sequence DLR.

This sequence belongs to the glycosyltransferase GT106 family. Highly and specifically expressed in the endosperm.

The protein resides in the golgi apparatus membrane. It functions in the pathway glycan biosynthesis. Glycosyltransferase involved in mannan biosynthesis. In Trigonella foenum-graecum (Fenugreek), this protein is Protein MANNAN SYNTHESIS-RELATED.